The following is a 338-amino-acid chain: MTARTDPGALRHDWTREELQALFDLPFNDLLFEAQLVHRRWFKADEVQMSTLLSIKTGGCPEDCGYCAQSSKFDTGLKASKLMEVEKVLAEARKAKEAGATRYCMGAAWREPKDRDMDMVCAMVEGIKDMGMETCMTLGMLSGQQVHRLAQSGLDYYNHNIDTSEEYYPKVISTRTYQDRLETLERVRNAGINVCSGGIVGMGESPSDRIGMLMTLANLEEHPQSVPINMLMPVEGTALGASEKIDPIDFVRLIAVARIAMPQSVVRLSAGREHMSEETQALCFLAGANSIFIGEKLLTTKNPEADKDQRLFAKLGIRSMPAHSCPSEKDVSADRKAG.

In terms of domain architecture, Radical SAM core spans 45 to 272; that stretch reads DEVQMSTLLS…QSVVRLSAGR (228 aa). Positions 60, 64, and 67 each coordinate [4Fe-4S] cluster. Positions 104, 135, 195, and 267 each coordinate [2Fe-2S] cluster.

It belongs to the radical SAM superfamily. Biotin synthase family. As to quaternary structure, homodimer. [4Fe-4S] cluster serves as cofactor. It depends on [2Fe-2S] cluster as a cofactor.

The catalysed reaction is (4R,5S)-dethiobiotin + (sulfur carrier)-SH + 2 reduced [2Fe-2S]-[ferredoxin] + 2 S-adenosyl-L-methionine = (sulfur carrier)-H + biotin + 2 5'-deoxyadenosine + 2 L-methionine + 2 oxidized [2Fe-2S]-[ferredoxin]. It participates in cofactor biosynthesis; biotin biosynthesis; biotin from 7,8-diaminononanoate: step 2/2. Functionally, catalyzes the conversion of dethiobiotin (DTB) to biotin by the insertion of a sulfur atom into dethiobiotin via a radical-based mechanism. This is Biotin synthase from Parvibaculum lavamentivorans (strain DS-1 / DSM 13023 / NCIMB 13966).